The following is a 105-amino-acid chain: Intracellular chorismate mutase (105 aa).

Positions 23–105 constitute a Chorismate mutase domain; sequence SQPVPEIDTL…LRLGRGRLGH (83 aa). Chorismate-binding residues include arginine 61, valine 70, and glutamate 74.

In terms of assembly, homodimer. Interacts with AroG.

It is found in the cytoplasm. The enzyme catalyses chorismate = prephenate. Its pathway is metabolic intermediate biosynthesis; prephenate biosynthesis; prephenate from chorismate: step 1/1. The formation of the complex with AroG activates the chorismate mutase activity. Catalyzes the Claisen rearrangement of chorismate to prephenate. Probably involved in the aromatic amino acid biosynthesis. The chain is Intracellular chorismate mutase from Mycobacterium bovis (strain ATCC BAA-935 / AF2122/97).